We begin with the raw amino-acid sequence, 121 residues long: Basic phospholipase A2 homolog AppP2 (121 aa).

Cystine bridges form between cysteine 26–cysteine 115, cysteine 28–cysteine 44, cysteine 43–cysteine 95, cysteine 49–cysteine 121, cysteine 50–cysteine 88, cysteine 57–cysteine 81, and cysteine 75–cysteine 86. The interval 105–117 (KKYKAYFKLKCKK) is important for membrane-damaging activities in eukaryotes and bacteria; heparin-binding.

Belongs to the phospholipase A2 family. Group II subfamily. K49 sub-subfamily. In terms of assembly, monomer. Expressed by the venom gland.

Its subcellular location is the secreted. Functionally, snake venom phospholipase A2 (PLA2) that lacks enzymatic activity. Displays edema-inducing activities. Is myotoxic. A model of myotoxic mechanism has been proposed: an apo Lys49-PLA2 is activated by the entrance of a hydrophobic molecule (e.g. fatty acid) at the hydrophobic channel of the protein leading to a reorientation of a monomer. This reorientation causes a transition between 'inactive' to 'active' states, causing alignment of C-terminal and membrane-docking sites (MDoS) side-by-side and putting the membrane-disruption sites (MDiS) in the same plane, exposed to solvent and in a symmetric position for both monomers. The MDoS region stabilizes the toxin on membrane by the interaction of charged residues with phospholipid head groups. Subsequently, the MDiS region destabilizes the membrane with penetration of hydrophobic residues. This insertion causes a disorganization of the membrane, allowing an uncontrolled influx of ions (i.e. calcium and sodium), and eventually triggering irreversible intracellular alterations and cell death. The polypeptide is Basic phospholipase A2 homolog AppP2 (Agkistrodon piscivorus piscivorus (Eastern cottonmouth)).